The chain runs to 182 residues: Negative transcriptional regulator PadR (182 aa).

Belongs to the PadR family. As to quaternary structure, homodimer.

It localises to the cytoplasm. Its activity is regulated as follows. PadR repressor activity is inhibited in the presence of phenolic acids, which directly modulate PadR binding to the promoter of padC, leading to the dissociation of PadR from the operator DNA and expression of padC. In the presence of MgCl(2), binding is not altered by phenolic acids. In terms of biological role, transcriptional regulator involved in the regulation of the metabolism of phenolic acids. In the absence of phenolic acids, represses the expression of padC, which encodes a phenolic acid decarboxylase (PAD) involved in the detoxification of harmful phenolic acids. Acts by binding to the padC promoter region, preventing the transcription of the gene. The sequence is that of Negative transcriptional regulator PadR from Bacillus subtilis (strain 168).